We begin with the raw amino-acid sequence, 194 residues long: Peptidyl-tRNA hydrolase (194 aa).

Tyrosine 17 provides a ligand contact to tRNA. Histidine 22 acts as the Proton acceptor in catalysis. Residues phenylalanine 68, asparagine 70, and asparagine 116 each coordinate tRNA.

This sequence belongs to the PTH family. In terms of assembly, monomer.

It localises to the cytoplasm. The catalysed reaction is an N-acyl-L-alpha-aminoacyl-tRNA + H2O = an N-acyl-L-amino acid + a tRNA + H(+). Its function is as follows. Hydrolyzes ribosome-free peptidyl-tRNAs (with 1 or more amino acids incorporated), which drop off the ribosome during protein synthesis, or as a result of ribosome stalling. In terms of biological role, catalyzes the release of premature peptidyl moieties from peptidyl-tRNA molecules trapped in stalled 50S ribosomal subunits, and thus maintains levels of free tRNAs and 50S ribosomes. In Histophilus somni (strain 129Pt) (Haemophilus somnus), this protein is Peptidyl-tRNA hydrolase.